The sequence spans 3131 residues: MSLHTPSDGQQDPALASKTLCEQISRALGLGQDKIENIFPGTPFQRDVIDCAADDKQRAVGHAVFEIPKDIDAARLAAAWKETVLHTPALRTCTFTSKSGDVLQVVLRDSFVFSWMSGPSVDLKEAVVQDEAAAALAGPRCNRFVLLEDPDTKERQLIWTFSHALVDSTFQERILRRVLKAYKDANDEHPRQFETPDSSQATPEEDLQPNPSKMLKIPQAADMDRAVEFWKDHLSGLKCFCLPAFVLSSVYAHPDAKAEHRISYSSSAQQKMSSATICRTALAILLSRYTHSPEALFGIVTEQTPLLEEQLMLDGPTRTVVPIRVSCASEQSVSDIMSTIDSYDQTMRQFAHAGLRNIASAGDDESAACGFQTVLLVSDGDAQPASTWEILKKTEEPEGFIPCTNRALLLSCQMTSSGAHLTARYDQSIIDAEQMARLLRQLGHLIQNLQTSTDLPVEKVDMMTQEDWLEIERWNSDSIDAQDTLIHSEMLKWTSQSPNKAAVAAWDGEWTYAELDNVSSRLAQHINSIDLGKEHAIVPIYFEKSKWVVASMLAVLKAGHAFTLIDPSDPPARTAQVVQQTSATVALTSKLHRETVQSTVGRCIVVDEEFVKSLPQSSELSASVKAHDLAYVIFTSGSTGIPKGIMIEHRSFSSCAIKFGPALGITSDTRALQFGSHAFGACILEIMTTLIHGGCVCIPSDDDRMNNVLEFINRTNVQLGHATPSYMGTFQPEVVPGLKTLVLVGEQMSASVNEVWAPRVQLLNGYGQSESSSICCVAKISPGSSEPNNIGHAVGAHSWIVDPEDPNRLAPIGAVGELVIESAGIARDYIVAPTQDKSPFIKTAPTWYPAKQLPDGFKIYRTGDLACYASDGSIVCLGRMDSQVKIRGQRVELGAVETHLRQQMPDDMTIVVEAVKFSDSSSTTVLTAFLIGAGEKNSHILDQRATREINAKMEQVLPRHSIPAFYISMNNLPQTATGKVDRRKLRIMGSKILSQKTHSTPSQQSQAAISSGTDTYTKLESIWITSLDLEPGSANMSATFFEMGGNSIIAIKMVNMARSNGIELKVSDIYQNPTLAGLKAIVIGTSLPYSLIPKVTRQGPVSEQSYAQNRMWFLDQLSEGASWYLIPFAVRMRGPVDVDALTRALLALEQRHETLRTTFENQDGVGVQIIHDRLSKELQVIDALDGDEGGLKTLYKVETTTFDITSEAGWSSTLIRLGKDDHILSIVMHHIISDGWSIDVLRRELIQLYAAALQGKDPSSALTPLPIQYSDFAVWQKQEAQAAEHERQLQYWKKQLADSSPAKIPTDFPRPDLLSGDAGVVPVAIDGELYQKLRGFCNKHNSTAFSILLAAFRAAHYRLTAVDDAVIGIPIANRNRWELENMIGFFVNTQCMRIAVDETDTFESLVRQVRSTTTAAFAHEDVPFERVVSALQPGHRDLSRTPLAQIMFAVHSQKDLGRFELEGIQSEPIASKAYTRFDVEFHLFQQADGLKGSCNFATDLFKPETIQNVVSVFFQILRHGLDQPETCISVLPLTDGVEELRRLDLLEIKRTNYPRDSSVVDVFREQAAANPEVIAVTDSSSRLTYAELDNKSELLSRWLRRRNLTPETLVSVLAPRSCETIVAYVGILKANLAYLPLDVRSPVTRMKDILSSVSGNTIVLMGSGVEDPGFDLPQLELVRITDTFDETIEDVQDSPQPSATSLAYVVFTSGSTGKPKGVMIEHRAIVRLVKSDNFPGFPSPARMSNVFNPAFDGAIWEINWMLLNGGTVVCIDYLTTLDGKELAAVFAKERVNAAFFAPAMLKLYLVDAREALKNLDFLIVGGERFDTKEAVEAMPLVRGKIANIYGPTEAGIISTCYNIPKDEAYTNGVPIGGSIYNSGAYVMDPNQQLVGLGVMGELVVTGDGVGRGYTNPELNKNRFIDITIEGKTFKAYRTGDRMRARVGDGLLEFFGRMDNQFKIRGNRIEAGEVESAMLSLKNVLNAAIVVRGGGEDEGPLEMVGFIVADDKNDTTEEEETGNQVEGWQDHFESGMYSDISTAVDQSAIGNDFKGWTSMYDGKDIDKGEMQEWLDDAIHTLHNGQIPRDVLEIGTGSGMILFNLNPGLNSYVGLDPSKSAVEFVNRAVESSPKFAGKAKVHVGMATDVNKLGEVHPDLVVFNSVVQYFPTPEYLAEVIDGLIAIPSVKRIFLGDIRSYATNGHFLAARAIHTLGTNNNATKDRVRQKIQELEDREEEFLVEPAFFTTLKERRPDVVKHVEIIPKNMKATNELSAYRYTAVVHLRDETDEPVYHIEKDSWVDFEAKQMDKTALLDHLRLSKDAMSVAVSNITYAHTAFERRIVESLDEDSKDDTKGTLDGAAWLSAVRSEAENRASLTVPDILEIAKEAGFRVEVSAARQWSQSGALDAVFHHFPPSSTDRTLIQFPTDNELRSSLTLANRPLQKLQRRRAALQVREKLQTLVPSYMVPPNIVVLDTMPLNTNGKIDRKELTRRARTLPKQQTAAPVPDFPISDIEITLCEEATEVFGMKVEISDHFFQLGGHSLLATKLISRIQHRLHVRVTVKDVFDSPVFADLAVIIRQGLAMQNPVAEGQDKQGWSSRVAPRTEVEKMLCEEFAAGLGVPVGITDNFFDLGGHSLMATKLAVRIGRRLIRHHSQGHLRLPCAFQLAKKLESSHSKSYEESGDDIQMADYTAFQLLDLEDPQDFVQSQIRPQLDSCYGTIQDVYPSTQMQKAFLFDPTTGEPRGLVPFYIDFPSNADAETLTKAIGALVDKLDMFRTVFLEAAGDLYQVVVEHLNLPIETIETEKNVNTATGDYLDVHGKDPVRLGHPCIQFAILKTASSVRVLLRMSHALYDGLSFEYIVRGLHVLYSGRNLPPPTQFARYMQYAAHSREEGYPFWREVLQNAPMTVLHDTNNGMSEQEMPASKAVHLSEVVNVPAQAIRNSTNTQATVFNTACALVLAKESGSQDVVFGRIVSGRQGLPVVWQDIIGPCTNAVPVHARVDDGNPQRIIRDLRDQYLRTLPFESLGFEEIKRNCTDWPEELTNFSVCVTYHNFEYHPESEVDNQKVEMGVLAKYVELSENEPLYDLAIAGEVEADGVNLKVTVVAKARLYNEARIRHVLEEVCKTFNGLNEAL.

A condensation 1 region spans residues 53-466; that stretch reads ADDKQRAVGH…VEKVDMMTQE (414 aa). Residues 186–212 form a disordered region; sequence NDEHPRQFETPDSSQATPEEDLQPNPS. Residues 495–887 are adenylation 1; that stretch reads SQSPNKAAVA…GRMDSQVKIR (393 aa). The region spanning 1010–1086 is the Carrier 1 domain; it reads SSGTDTYTKL…GLKAIVIGTS (77 aa). At S1047 the chain carries O-(pantetheine 4'-phosphoryl)serine. Residues 1105–1534 are condensation 2; sequence SYAQNRMWFL…ETCISVLPLT (430 aa). An adenylation 2 region spans residues 1563–1960; the sequence is FREQAAANPE…GRMDNQFKIR (398 aa). Positions 2021 to 2177 are S-adenosyl-L-methionine-dependent N-methyltransferase; that stretch reads EGWQDHFESG…YLAEVIDGLI (157 aa). Carrier domains follow at residues 2504 to 2578 and 2598 to 2671; these read FPIS…RQGL and APRT…ESSH. Residues S2538 and S2632 each carry the O-(pantetheine 4'-phosphoryl)serine modification. The condensation 3 stretch occupies residues 2718–3123; the sequence is QDVYPSTQMQ…RHVLEEVCKT (406 aa).

The protein belongs to the ATP-dependent AMP-binding enzyme family. Pantetheine 4'-phosphate is required as a cofactor. In terms of processing, the N-terminus is blocked.

Its pathway is antibiotic biosynthesis; enniatin biosynthesis. The N-methylation activity is inhibited by S-adenosyl-L-homocysteine and sinefugin. Nonribosomal peptide synthetase that synthesizes enniatin by coupling three D-hydroxycarboxylic acids and three L-amino acids via amide and ester bonds in an alternating fashion. Whereas ESYN1 can accept different amino acids as precursors (L -valine, L-isoleucine or L-leucine), only one species of D-hydroxycarboxylic acid can be found in natural enniatin isolates (D-hydroxyisovaleric acid, D-Hiv). D-Hiv stems from L-valine deanimation by a valine aminotransferase to 2-keto-isovaleric acid (2-Kiv), which becomes subsequently reduced by a keto-isovaleric acid reductase (KivR) to D-Hiv. Peptide bond formation and N-methylation of the amino acid occur before three enzyme-bound dipeptidols are condensed to a hexapeptidol. The chain is Enniatin synthase from Fusarium equiseti (Fusarium scirpi).